Here is a 304-residue protein sequence, read N- to C-terminus: D-alanine--D-alanine ligase (304 aa).

The ATP-grasp domain maps to 107–300 (KRLWQGSGLP…FDELVARILG (194 aa)). ATP is bound at residue 134–186 (VGYPVIVKPAREGSSLGMSRVEGPEELAEAYRVAAAYDDTVLAEAWVEGEEYT). Residues D254, E267, and N269 each coordinate Mg(2+).

It belongs to the D-alanine--D-alanine ligase family. Requires Mg(2+) as cofactor. It depends on Mn(2+) as a cofactor.

The protein resides in the cytoplasm. The enzyme catalyses 2 D-alanine + ATP = D-alanyl-D-alanine + ADP + phosphate + H(+). It participates in cell wall biogenesis; peptidoglycan biosynthesis. Its function is as follows. Cell wall formation. In Halorhodospira halophila (strain DSM 244 / SL1) (Ectothiorhodospira halophila (strain DSM 244 / SL1)), this protein is D-alanine--D-alanine ligase.